Here is a 151-residue protein sequence, read N- to C-terminus: Ubiquitin-like protein 4A-B (151 aa).

The Ubiquitin-like domain occupies 1 to 76 (MILTIKPLKG…LNLVVRPAGE (76 aa)).

As to quaternary structure, component of the BAT3 complex.

It is found in the cytoplasm. It localises to the cytosol. Functionally, component of the BAT3 complex, a multiprotein complex involved in the post-translational delivery of tail-anchored (TA) membrane proteins to the endoplasmic reticulum membrane. TA membrane proteins, also named type II transmembrane proteins, contain a single C-terminal transmembrane region. The polypeptide is Ubiquitin-like protein 4A-B (ubl4ab) (Oncorhynchus mykiss (Rainbow trout)).